A 61-amino-acid polypeptide reads, in one-letter code: Translational regulator CsrA (61 aa).

The protein belongs to the CsrA/RsmA family. As to quaternary structure, homodimer; the beta-strands of each monomer intercalate to form a hydrophobic core, while the alpha-helices form wings that extend away from the core.

The protein localises to the cytoplasm. A key translational regulator that binds mRNA to regulate translation initiation and/or mRNA stability. Mediates global changes in gene expression, shifting from rapid growth to stress survival by linking envelope stress, the stringent response and the catabolite repression systems. Usually binds in the 5'-UTR; binding at or near the Shine-Dalgarno sequence prevents ribosome-binding, repressing translation, binding elsewhere in the 5'-UTR can activate translation and/or stabilize the mRNA. Its function is antagonized by small RNA(s). This is Translational regulator CsrA from Glaesserella parasuis serovar 5 (strain SH0165) (Haemophilus parasuis).